Consider the following 357-residue polypeptide: Glycerol-3-phosphate dehydrogenase [NAD(P)+] (357 aa).

Ser30, Phe31, Arg51, and Lys124 together coordinate NADPH. Residues Lys124 and Gly152 each contribute to the sn-glycerol 3-phosphate site. Ala156 lines the NADPH pocket. Sn-glycerol 3-phosphate contacts are provided by Lys207, Asp260, Ser270, Arg271, and Asn272. Catalysis depends on Lys207, which acts as the Proton acceptor. An NADPH-binding site is contributed by Arg271. Glu297 contributes to the NADPH binding site.

The protein belongs to the NAD-dependent glycerol-3-phosphate dehydrogenase family.

The protein localises to the cytoplasm. The enzyme catalyses sn-glycerol 3-phosphate + NAD(+) = dihydroxyacetone phosphate + NADH + H(+). It catalyses the reaction sn-glycerol 3-phosphate + NADP(+) = dihydroxyacetone phosphate + NADPH + H(+). It participates in membrane lipid metabolism; glycerophospholipid metabolism. Functionally, catalyzes the reduction of the glycolytic intermediate dihydroxyacetone phosphate (DHAP) to sn-glycerol 3-phosphate (G3P), the key precursor for phospholipid synthesis. This chain is Glycerol-3-phosphate dehydrogenase [NAD(P)+], found in Acinetobacter baumannii (strain AB307-0294).